Reading from the N-terminus, the 122-residue chain is Probable non-specific lipid-transfer protein 3 (122 aa).

The N-terminal stretch at 1 to 29 (MARLNSKAVAAAVVLAAVVLMMAGREASA) is a signal peptide. 4 disulfides stabilise this stretch: C33–C81, C43–C58, C59–C104, and C79–C118.

It belongs to the plant LTP family. As to expression, expressed in phloem. Also detected in the epidermis near the vascular tissues in resistant plants infected by Hessian fly larvae.

In terms of biological role, plant non-specific lipid-transfer proteins transfer phospholipids as well as galactolipids across membranes. May play a role in wax or cutin deposition in the cell walls of expanding epidermal cells and certain secretory tissues. This is Probable non-specific lipid-transfer protein 3 (LTP3) from Triticum aestivum (Wheat).